The primary structure comprises 362 residues: uncharacterized protein (362 aa).

A run of 7 helical transmembrane segments spans residues 32 to 52 (GAGW…VGAV), 75 to 95 (FVDA…ADGV), 106 to 126 (VVML…DLSV), 148 to 168 (AAVG…GVGA), 176 to 196 (GVGT…VVVV), 287 to 307 (VFAL…PVAM), and 329 to 349 (VLVA…CGMF).

This sequence belongs to the peptidase S58 family.

Its subcellular location is the cell membrane. Functionally, aminopeptidase. This is an uncharacterized protein from Mycobacterium leprae (strain TN).